We begin with the raw amino-acid sequence, 175 residues long: MQSLQDKASVLSGVDQAEAFAIDESNLFDKLGLQTFINLSTNFYTRVYDDEEEWFQSIFSNSNKEDAIQNQYEFFVQRMGGPPLYSQRKGHPALIGRHRPFPVTHQAAERWLEHMQNALDDSVDIDQDSKIKMMKFFRHTAFFLVAGNELKNQNEKPKHKPQCACKHAANKPAEE.

Heme is bound by residues tyrosine 85 and histidine 98. The interval 153-175 (QNEKPKHKPQCACKHAANKPAEE) is disordered.

The protein belongs to the truncated hemoglobin family. Group II subfamily. In terms of assembly, homodimer when ferric. Interacts with RGLG3 and RGLG4. It depends on heme as a cofactor. In terms of tissue distribution, expressed ubiquitously, with higher levels in root tissue than in shoot tissue.

Hemoglobin-like protein that exhibits an unusual concentration-independent binding of O(2) and CO. May promote shoot organogenesis from root explants in vitro. Inhibits RGLG3 and RGLG4 ubiquitination activity. This chain is Two-on-two hemoglobin-3 (GLB3), found in Arabidopsis thaliana (Mouse-ear cress).